The chain runs to 908 residues: Mechanosensitive ion channel protein 8 (908 aa).

Residues 1–25 show a composition bias toward polar residues; that stretch reads MDFRNSFKSHSSYKQIRSPGDQSEP. 4 disordered regions span residues 1 to 88, 148 to 172, 190 to 221, and 242 to 265; these read MDFR…HTAV, DQEN…SFDA, VAGS…LQEE, and VKTR…WRSG. A compositionally biased stretch (basic and acidic residues) spans 31-70; sequence PILHDHHPDHSGMVVDDQKPDSTRSSLDDGRNAPVERDAS. 2 stretches are compositionally biased toward polar residues: residues 75–85 and 156–171; these read QDNTTGTSTDH and HQTM…TSFD. Low complexity predominate over residues 196 to 206; it reads SSSSHSSSSSS. Polar residues predominate over residues 207-218; the sequence is ATMRTNQDQPQL. Basic and acidic residues predominate over residues 247 to 256; the sequence is RLQDPPREEE. 6 helical membrane passes run 298–318, 341–361, 381–401, 411–431, 673–693, and 709–729; these read AITL…ACSL, LVLI…VFFI, AVQN…LFDK, FLPY…LWLI, MINI…LEIA, and AFIF…LFIV.

Belongs to the MscS (TC 1.A.23) family. Expressed in tricellular and mature pollen, and in germinating tube. Not detected in leaves or roots.

It localises to the cell membrane. Its subcellular location is the endomembrane system. Its activity is regulated as follows. Not regulated by MgCl(2), ruthenium red or tetramethylammonium-Cl. Its function is as follows. Mechanosensitive channel that opens in response to stretch forces in the membrane lipid bilayer. Exhibits a 6.3-fold preference for chloride over sodium. Regulates osmotic forces during pollen hydration and germination. The polypeptide is Mechanosensitive ion channel protein 8 (Arabidopsis thaliana (Mouse-ear cress)).